A 307-amino-acid polypeptide reads, in one-letter code: Oxygen-dependent coproporphyrinogen-III oxidase (307 aa).

S94 is a substrate binding site. Residues H98 and H108 each contribute to the a divalent metal cation site. Catalysis depends on H108, which acts as the Proton donor. A substrate-binding site is contributed by N110–R112. Residues H147 and H177 each contribute to the a divalent metal cation site. The important for dimerization stretch occupies residues Y242 to Q277. A substrate-binding site is contributed by G260–R262.

The protein belongs to the aerobic coproporphyrinogen-III oxidase family. In terms of assembly, homodimer. A divalent metal cation serves as cofactor.

Its subcellular location is the cytoplasm. It carries out the reaction coproporphyrinogen III + O2 + 2 H(+) = protoporphyrinogen IX + 2 CO2 + 2 H2O. It functions in the pathway porphyrin-containing compound metabolism; protoporphyrin-IX biosynthesis; protoporphyrinogen-IX from coproporphyrinogen-III (O2 route): step 1/1. In terms of biological role, involved in the heme biosynthesis. Catalyzes the aerobic oxidative decarboxylation of propionate groups of rings A and B of coproporphyrinogen-III to yield the vinyl groups in protoporphyrinogen-IX. In Chromohalobacter salexigens (strain ATCC BAA-138 / DSM 3043 / CIP 106854 / NCIMB 13768 / 1H11), this protein is Oxygen-dependent coproporphyrinogen-III oxidase.